The following is an 81-amino-acid chain: Trefoil factor 1 (81 aa).

The first 21 residues, 1-21 (MEHKVTCVLAMVLMLALSSLA), serve as a signal peptide directing secretion. The residue at position 22 (Gln22) is a Pyrrolidone carboxylic acid. The 44-residue stretch at 26–69 (ETCAVIPRERINCGFPGVTAQQCKEKGCCFDDSVRGFPWCFRPL) folds into the P-type domain. 3 disulfides stabilise this stretch: Cys28/Cys54, Cys38/Cys53, and Cys48/Cys65.

It localises to the secreted. Functionally, stabilizer of the mucous gel overlying the gastrointestinal mucosa that provides a physical barrier against various noxious agents. This Rattus norvegicus (Rat) protein is Trefoil factor 1 (Tff1).